The sequence spans 521 residues: MLLELALGLLVLALFLHLRPTPTAKSKALRHLPNPPSPKPRLPFIGHLHLLKDKLLHYALIDLSKKHGPLFSLYFGSMPTVVASTPELFKLFLQTHEATSFNTRFQTSAIRRLTYDSSVAMVPFGPYWKFVRKLIMNDLLNATTVNKLRPLRTQQIRKFLRVMAQGAEAQKPLDLTEELLKWTNSTISMMMLGEAEEIRDIAREVLKIFGEYSLTDFIWPLKHLKVGKYEKRIDDILNKFDPVVERVIKKRREIVRRRKNGEVVEGEVSGVFLDTLLEFAEDETMEIKITKDHIKGLVVDFFSAGTDSTAVATEWALAELINNPKVLEKAREEVYSVVGKDRLVDEVDTQNLPYIRAIVKETFRMHPPLPVVKRKCTEECEINGYVIPEGALILFNVWQVGRDPKYWDRPSEFRPERFLETGAEGEAGPLDLRGQHFQLLPFGSGRRMCPGVNLATSGMATLLASLIQCFDLQVLGPQGQILKGGDAKVSMEERAGLTVPRAHSLVCVPLARIGVASKLLS.

Residues 2 to 23 form a helical membrane-spanning segment; it reads LLELALGLLVLALFLHLRPTPT. Cys449 provides a ligand contact to heme.

This sequence belongs to the cytochrome P450 family. Heme is required as a cofactor.

The protein resides in the endoplasmic reticulum membrane. The protein localises to the microsome membrane. The enzyme catalyses (2S)-liquiritigenin + reduced [NADPH--hemoprotein reductase] + O2 = (2R,3S)-2,4',7-trihydroxyisoflavanone + oxidized [NADPH--hemoprotein reductase] + H2O + H(+). It catalyses the reaction (2S)-naringenin + reduced [NADPH--hemoprotein reductase] + O2 = 2-hydroxy-2,3-dihydrogenistein + oxidized [NADPH--hemoprotein reductase] + H2O + H(+). Its function is as follows. Involved in isoflavonoid biosynthesis. Converts liquiritigenin to 2-hydroxyisoflavanone which spontaneously dehydrates to daidzein. The chain is 2-hydroxyisoflavanone synthase (IFS2) from Glycine max (Soybean).